A 118-amino-acid polypeptide reads, in one-letter code: V-type proton ATPase subunit G 1 (118 aa).

A2 carries the N-acetylalanine modification. Positions 25-90 (ARKRKARRLK…VQGMQSSQQR (66 aa)) are disordered. Basic and acidic residues predominate over residues 35–56 (QAKEEAQMEVEQYRREREHEFQ). Composition is skewed to polar residues over residues 57–69 (SKQQ…QGNL) and 78–89 (RHQVQGMQSSQQ).

This sequence belongs to the V-ATPase G subunit family. In terms of assembly, V-ATPase is a heteromultimeric enzyme made up of two complexes: the ATP-hydrolytic V1 complex and the proton translocation V0 complex. The V1 complex consists of three catalytic AB heterodimers that form a heterohexamer, three peripheral stalks each consisting of EG heterodimers, one central rotor including subunits D and F, and the regulatory subunits C and H. The proton translocation complex V0 consists of the proton transport subunit a, a ring of proteolipid subunits c9c'', rotary subunit d, subunits e and f, and the accessory subunits ATP6AP1/Ac45 and ATP6AP2/PRR.

It is found in the apical cell membrane. Functionally, subunit of the V1 complex of vacuolar(H+)-ATPase (V-ATPase), a multisubunit enzyme composed of a peripheral complex (V1) that hydrolyzes ATP and a membrane integral complex (V0) that translocates protons. V-ATPase is responsible for acidifying and maintaining the pH of intracellular compartments and in some cell types, is targeted to the plasma membrane, where it is responsible for acidifying the extracellular environment. In aerobic conditions, involved in intracellular iron homeostasis, thus triggering the activity of Fe(2+) prolyl hydroxylase (PHD) enzymes, and leading to HIF1A hydroxylation and subsequent proteasomal degradation. This chain is V-type proton ATPase subunit G 1 (ATP6V1G1), found in Pan troglodytes (Chimpanzee).